The sequence spans 200 residues: Cytochrome c biogenesis ATP-binding export protein CcmA (200 aa).

The region spanning 3–200 (LSGRGLRCVR…AREMRIGAAA (198 aa)) is the ABC transporter domain. An ATP-binding site is contributed by 35–42 (GHNGAGKT).

This sequence belongs to the ABC transporter superfamily. CcmA exporter (TC 3.A.1.107) family. In terms of assembly, the complex is composed of two ATP-binding proteins (CcmA) and two transmembrane proteins (CcmB).

Its subcellular location is the cell inner membrane. It catalyses the reaction heme b(in) + ATP + H2O = heme b(out) + ADP + phosphate + H(+). Its function is as follows. Part of the ABC transporter complex CcmAB involved in the biogenesis of c-type cytochromes; once thought to export heme, this seems not to be the case, but its exact role is uncertain. Responsible for energy coupling to the transport system. The chain is Cytochrome c biogenesis ATP-binding export protein CcmA from Rhodopseudomonas palustris (strain BisB5).